The sequence spans 123 residues: Small ribosomal subunit protein uS12 (123 aa).

Residues 1-29 are disordered; it reads MPTINQLVRKGREPQKAKSKVPAMEQNPQ. Asp89 bears the 3-methylthioaspartic acid mark.

The protein belongs to the universal ribosomal protein uS12 family. As to quaternary structure, part of the 30S ribosomal subunit. Contacts proteins S8 and S17. May interact with IF1 in the 30S initiation complex.

Its function is as follows. With S4 and S5 plays an important role in translational accuracy. In terms of biological role, interacts with and stabilizes bases of the 16S rRNA that are involved in tRNA selection in the A site and with the mRNA backbone. Located at the interface of the 30S and 50S subunits, it traverses the body of the 30S subunit contacting proteins on the other side and probably holding the rRNA structure together. The combined cluster of proteins S8, S12 and S17 appears to hold together the shoulder and platform of the 30S subunit. The polypeptide is Small ribosomal subunit protein uS12 (Novosphingobium aromaticivorans (strain ATCC 700278 / DSM 12444 / CCUG 56034 / CIP 105152 / NBRC 16084 / F199)).